Reading from the N-terminus, the 188-residue chain is Transmembrane protein 160 (188 aa).

A mitochondrion-targeting transit peptide spans M1–R96. Residues P24 to V52 are disordered. Residue S48 is modified to Phosphoserine. 2 helical membrane-spanning segments follow: residues F102–A122 and A135–L155. Residues P168–E188 are disordered.

It belongs to the TMEM160 family.

Its subcellular location is the mitochondrion inner membrane. The polypeptide is Transmembrane protein 160 (Homo sapiens (Human)).